We begin with the raw amino-acid sequence, 102 residues long: Large ribosomal subunit protein bL21 (102 aa).

It belongs to the bacterial ribosomal protein bL21 family. In terms of assembly, part of the 50S ribosomal subunit. Contacts protein L20.

This protein binds to 23S rRNA in the presence of protein L20. This is Large ribosomal subunit protein bL21 from Bacillus licheniformis (strain ATCC 14580 / DSM 13 / JCM 2505 / CCUG 7422 / NBRC 12200 / NCIMB 9375 / NCTC 10341 / NRRL NRS-1264 / Gibson 46).